The chain runs to 177 residues: Ribulose bisphosphate carboxylase small subunit, chloroplastic 5 (177 aa).

The N-terminal 56 residues, 1 to 56, are a transit peptide targeting the chloroplast; that stretch reads MASSMMASTAAVARAGPAQSSMVAPFNGLRSSVAFPATRKANNDLSTLPSNGGRVS.

It belongs to the RuBisCO small chain family. In terms of assembly, heterohexadecamer of 8 large and 8 small subunits.

Its subcellular location is the plastid. It localises to the chloroplast. RuBisCO catalyzes two reactions: the carboxylation of D-ribulose 1,5-bisphosphate, the primary event in carbon dioxide fixation, as well as the oxidative fragmentation of the pentose substrate. Both reactions occur simultaneously and in competition at the same active site. Although the small subunit is not catalytic it is essential for maximal activity. The protein is Ribulose bisphosphate carboxylase small subunit, chloroplastic 5 of Lemna gibba (Swollen duckweed).